A 649-amino-acid polypeptide reads, in one-letter code: Replication factor C small subunit (649 aa).

An ATP-binding site is contributed by 55–385; it reads GPAGVGKCVT…GCIPTVMHNT (331 aa).

The protein belongs to the activator 1 small subunits family. RfcS subfamily. In terms of assembly, heteromultimer composed of small subunits (RfcS) and large subunits (RfcL). This protein undergoes a protein self splicing that involves a post-translational excision of the intervening region (intein) followed by peptide ligation.

Part of the RFC clamp loader complex which loads the PCNA sliding clamp onto DNA. This is Replication factor C small subunit (rfcS) from Haloquadratum walsbyi (strain DSM 16790 / HBSQ001).